The following is an 841-amino-acid chain: DNA mismatch repair protein MutS (841 aa).

An ATP-binding site is contributed by 596–603 (GPNMSGKS).

It belongs to the DNA mismatch repair MutS family.

Functionally, this protein is involved in the repair of mismatches in DNA. It is possible that it carries out the mismatch recognition step. This protein has a weak ATPase activity. The protein is DNA mismatch repair protein MutS of Acholeplasma laidlawii (strain PG-8A).